The primary structure comprises 455 residues: Acid sphingomyelinase-like phosphodiesterase 3b (455 aa).

Residues 1–18 (MRLLAWLIFLANWGGARA) form the signal peptide. Zn(2+)-binding residues include aspartate 28 and histidine 30. The cysteines at positions 45 and 64 are disulfide-linked. N-linked (GlcNAc...) asparagine glycosylation is present at asparagine 72. Zn(2+) is bound by residues aspartate 93 and asparagine 134. An N-linked (GlcNAc...) asparagine glycan is attached at asparagine 164. Residues histidine 236, histidine 277, and histidine 279 each coordinate Zn(2+). An N-linked (GlcNAc...) asparagine glycan is attached at asparagine 343. Intrachain disulfides connect cysteine 405/cysteine 409 and cysteine 415/cysteine 428.

The protein belongs to the acid sphingomyelinase family. As to quaternary structure, interacts with TLR4, TLR7, TLR8 and TLR9. Requires Zn(2+) as cofactor. In terms of processing, N-glycosylated.

The protein localises to the secreted. Its subcellular location is the cell membrane. Functionally, lipid-modulating phosphodiesterase. Active on the surface of macrophages and dendritic cells and strongly influences macrophage lipid composition and membrane fluidity. Acts as a negative regulator of Toll-like receptor signaling. Has in vitro phosphodiesterase activity, but the physiological substrate is unknown. Lacks activity with phosphocholine-containing lipids, but can cleave CDP-choline, and can release phosphate from ATP and ADP (in vitro). This is Acid sphingomyelinase-like phosphodiesterase 3b (SMPDL3B) from Homo sapiens (Human).